A 34-amino-acid polypeptide reads, in one-letter code: Protamine-Z1/Z2 (34 aa).

The interval 1–34 is disordered; that stretch reads PRRRRRSSRPVRRRRRYRRSTVARRRRRVVRRRR.

As to expression, testis.

The protein localises to the nucleus. The protein resides in the chromosome. Its function is as follows. Protamines substitute for histones in the chromatin of sperm during the haploid phase of spermatogenesis. They compact sperm DNA into a highly condensed, stable and inactive complex. The chain is Protamine-Z1/Z2 from Thunnus thynnus (Atlantic bluefin tuna).